Consider the following 314-residue polypeptide: L-lactate dehydrogenase 2 (314 aa).

NAD(+) contacts are provided by residues Val-16, Asp-37, Lys-42, Tyr-68, and 82 to 83; that span reads GL. Substrate-binding positions include Gln-85, Arg-91, and 123–126; that span reads NPVD. NAD(+)-binding positions include 121-123 and Ser-146; that span reads ATN. Position 151–154 (151–154) interacts with substrate; the sequence is DSAR. Positions 156 and 171 each coordinate beta-D-fructose 1,6-bisphosphate. His-178 acts as the Proton acceptor in catalysis. A Phosphotyrosine modification is found at Tyr-223. Thr-232 is a binding site for substrate.

Belongs to the LDH/MDH superfamily. LDH family. Homotetramer.

It localises to the cytoplasm. It carries out the reaction (S)-lactate + NAD(+) = pyruvate + NADH + H(+). It functions in the pathway fermentation; pyruvate fermentation to lactate; (S)-lactate from pyruvate: step 1/1. Allosterically activated by fructose 1,6-bisphosphate (FBP). Functionally, catalyzes the conversion of lactate to pyruvate. In Bacillus anthracis, this protein is L-lactate dehydrogenase 2.